The sequence spans 154 residues: Large ribosomal subunit protein uL13 (154 aa).

The protein belongs to the universal ribosomal protein uL13 family. In terms of assembly, part of the 50S ribosomal subunit.

Functionally, this protein is one of the early assembly proteins of the 50S ribosomal subunit, although it is not seen to bind rRNA by itself. It is important during the early stages of 50S assembly. In Rhizobium etli (strain ATCC 51251 / DSM 11541 / JCM 21823 / NBRC 15573 / CFN 42), this protein is Large ribosomal subunit protein uL13.